Reading from the N-terminus, the 325-residue chain is Secreted RxLR effector protein RXLR-C07 (325 aa).

An N-terminal signal peptide occupies residues 1–19 (MQGVRITILWCIVLATIYA). TPR repeat units follow at residues 37–75 (RGLRNAGMKANDERMFKDAIEKLRHAISLLHNRVFGEER), 92–125 (AQILNDYGSVLIRTKQYDEAIEVLEDSVAMIEKI), 134–167 (GLSLRSLADAYMEKKAFKSAIKRYKTLRKHVKKG), 218–251 (AELYMELSSAHVEVGEIDDALRAAETASAIFLQR), and 260–293 (AFSLNALAGVKMQQKKVDEAIDLLDRAHNIAVSI). A RxLR-dEER motif is present at residues 37 to 75 (RGLRNAGMKANDERMFKDAIEKLRHAISLLHNRVFGEER).

Belongs to the RxLR effector family.

The protein localises to the secreted. Its subcellular location is the host cytoplasm. It is found in the host nucleus. It localises to the host nucleolus. Its function is as follows. Secreted effector that suppresses pattern-triggered immunity (PTI) in plant host. The chain is Secreted RxLR effector protein RXLR-C07 from Plasmopara halstedii (Downy mildew of sunflower).